A 180-amino-acid chain; its full sequence is MKLDKYTVGKRYGKALFELAVEKNQAEAIYQELLTLREVYHQVPGIGDILSDDRLEPYEKDSIMEKLVTGFSEMMQNFLRVVYEYRRMYDLLLMIDEYERRYDEHQGLILGSVTTAIPLSKEQHQAMEEKAAQLLGYEQAHLVNLIDPSIVGGVVIEANHQVIDGSIRKQLEHMQQKLLK.

The protein belongs to the ATPase delta chain family. In terms of assembly, F-type ATPases have 2 components, F(1) - the catalytic core - and F(0) - the membrane proton channel. F(1) has five subunits: alpha(3), beta(3), gamma(1), delta(1), epsilon(1). F(0) has three main subunits: a(1), b(2) and c(10-14). The alpha and beta chains form an alternating ring which encloses part of the gamma chain. F(1) is attached to F(0) by a central stalk formed by the gamma and epsilon chains, while a peripheral stalk is formed by the delta and b chains.

Its subcellular location is the cell membrane. Its function is as follows. F(1)F(0) ATP synthase produces ATP from ADP in the presence of a proton or sodium gradient. F-type ATPases consist of two structural domains, F(1) containing the extramembraneous catalytic core and F(0) containing the membrane proton channel, linked together by a central stalk and a peripheral stalk. During catalysis, ATP synthesis in the catalytic domain of F(1) is coupled via a rotary mechanism of the central stalk subunits to proton translocation. Functionally, this protein is part of the stalk that links CF(0) to CF(1). It either transmits conformational changes from CF(0) to CF(1) or is implicated in proton conduction. This Enterococcus faecalis (strain ATCC 700802 / V583) protein is ATP synthase subunit delta.